A 729-amino-acid polypeptide reads, in one-letter code: Fatty acid oxidation complex subunit alpha (729 aa).

The segment at 1-189 is enoyl-CoA hydratase/isomerase; that stretch reads MLYKGDTLYL…KIGLVDGVVK (189 aa). Aspartate 296 serves as a coordination point for substrate. The 3-hydroxyacyl-CoA dehydrogenase stretch occupies residues 311-729; that stretch reads ETPKQAAVLG…ARLVGDLKTA (419 aa). NAD(+)-binding positions include methionine 324, aspartate 343, 400–402, lysine 407, and serine 429; that span reads VVE. Histidine 450 serves as the catalytic For 3-hydroxyacyl-CoA dehydrogenase activity. Asparagine 453 is a binding site for NAD(+). Substrate contacts are provided by asparagine 500 and tyrosine 660.

The protein in the N-terminal section; belongs to the enoyl-CoA hydratase/isomerase family. In the C-terminal section; belongs to the 3-hydroxyacyl-CoA dehydrogenase family. As to quaternary structure, heterotetramer of two alpha chains (FadB) and two beta chains (FadA).

The catalysed reaction is a (3S)-3-hydroxyacyl-CoA + NAD(+) = a 3-oxoacyl-CoA + NADH + H(+). The enzyme catalyses a (3S)-3-hydroxyacyl-CoA = a (2E)-enoyl-CoA + H2O. It catalyses the reaction a 4-saturated-(3S)-3-hydroxyacyl-CoA = a (3E)-enoyl-CoA + H2O. It carries out the reaction (3S)-3-hydroxybutanoyl-CoA = (3R)-3-hydroxybutanoyl-CoA. The catalysed reaction is a (3Z)-enoyl-CoA = a 4-saturated (2E)-enoyl-CoA. The enzyme catalyses a (3E)-enoyl-CoA = a 4-saturated (2E)-enoyl-CoA. Its pathway is lipid metabolism; fatty acid beta-oxidation. Its function is as follows. Involved in the aerobic and anaerobic degradation of long-chain fatty acids via beta-oxidation cycle. Catalyzes the formation of 3-oxoacyl-CoA from enoyl-CoA via L-3-hydroxyacyl-CoA. It can also use D-3-hydroxyacyl-CoA and cis-3-enoyl-CoA as substrate. The protein is Fatty acid oxidation complex subunit alpha of Escherichia coli (strain SE11).